A 508-amino-acid chain; its full sequence is Photosystem II CP47 reaction center protein (508 aa).

6 helical membrane-spanning segments follow: residues 21-36 (AVHI…WAGS), 101-115 (IVFS…IWHW), 140-156 (GIHL…FGAF), 203-218 (IAAG…FHLS), 237-252 (VLSS…AFVV), and 457-472 (TFAL…HGAR).

It belongs to the PsbB/PsbC family. PsbB subfamily. As to quaternary structure, PSII is composed of 1 copy each of membrane proteins PsbA, PsbB, PsbC, PsbD, PsbE, PsbF, PsbH, PsbI, PsbJ, PsbK, PsbL, PsbM, PsbT, PsbX, PsbY, PsbZ, Psb30/Ycf12, at least 3 peripheral proteins of the oxygen-evolving complex and a large number of cofactors. It forms dimeric complexes. Requires Binds multiple chlorophylls. PSII binds additional chlorophylls, carotenoids and specific lipids. as cofactor.

Its subcellular location is the plastid. It localises to the chloroplast thylakoid membrane. Functionally, one of the components of the core complex of photosystem II (PSII). It binds chlorophyll and helps catalyze the primary light-induced photochemical processes of PSII. PSII is a light-driven water:plastoquinone oxidoreductase, using light energy to abstract electrons from H(2)O, generating O(2) and a proton gradient subsequently used for ATP formation. This Brachypodium distachyon (Purple false brome) protein is Photosystem II CP47 reaction center protein.